Consider the following 267-residue polypeptide: Palmitoyltransferase ZDHHC12 (267 aa).

The Cytoplasmic segment spans residues 1-9 (MAPWALLSP). The helical transmembrane segment at 10 to 30 (GVLVRTGHTVLTWGITLVLFL) threads the bilayer. The Lumenal portion of the chain corresponds to 31–43 (HDTELRQWEEQGE). Residues 44-64 (LLLPLTFLLLVLGSLLLYLAV) form a helical membrane-spanning segment. Topologically, residues 65-140 (SLMDPGYVNV…ENCVGERNHP (76 aa)) are cytoplasmic. A DHHC domain is found at 97-147 (RRCRYCLVLQPLRARHCRECRRCVRRYDHHCPWMENCVGERNHPLFVVYLA). The active-site S-palmitoyl cysteine intermediate is Cys-127. The helical transmembrane segment at 141 to 161 (LFVVYLALQLVVLLWGLYLAW) threads the bilayer. Topologically, residues 162 to 178 (SGLRFFQPWGQWLRSSG) are lumenal. A helical transmembrane segment spans residues 179-199 (LLFATFLLLSLFSLVASLLLV). Residues 200–267 (SHLYLVASNT…EEEEGSSPAV (68 aa)) are Cytoplasmic-facing.

This sequence belongs to the DHHC palmitoyltransferase family. In terms of tissue distribution, widely expressed.

It localises to the golgi apparatus membrane. It is found in the endoplasmic reticulum membrane. The catalysed reaction is L-cysteinyl-[protein] + hexadecanoyl-CoA = S-hexadecanoyl-L-cysteinyl-[protein] + CoA. Palmitoyltransferase that catalyzes the addition of palmitate onto various protein substrates. Has a palmitoyltransferase activity toward gephyrin/GPHN, regulating its clustering at synapses and its function in gamma-aminobutyric acid receptor clustering. Thereby, indirectly regulates GABAergic synaptic transmission. Negatively regulates NLRP3-driven inflammation. Catalyzes NLRP3 palmitoylation, leading to its degradation via the chaperone-mediated autophagy (CMA) process. This chain is Palmitoyltransferase ZDHHC12, found in Homo sapiens (Human).